The following is a 431-amino-acid chain: POU domain, class 2, transcription factor 3 (431 aa).

Disordered stretches follow at residues 1–39 (MVNLEPMHTEIKMSGDVADSTDTRSTFGQVEPGNDRNGL), 130–180 (LLPQ…EPTD), and 248–267 (DAESSPSDPSASTPSSYPTL). In terms of domain architecture, POU-specific spans 176–250 (DEPTDLEELE…LLEKWLNDAE (75 aa)). Positions 251–267 (SSPSDPSASTPSSYPTL) are enriched in low complexity. Residues 274–333 (KRKKRTSIETNIRLTLEKRFQDNPKPSSEEISMIAEQLSMEKEVVRVWFCNRRQKEKRIN) constitute a DNA-binding region (homeobox). Composition is skewed to low complexity over residues 352–364 (PSGSLGPLSVPPV), 374–390 (SSCSPGNNSRPSSPGSG), and 398–419 (ASQNNSKAAMNSSSSSSFNSSG). Positions 352–419 (PSGSLGPLSV…SSSSSFNSSG (68 aa)) are disordered.

Belongs to the POU transcription factor family. Class-2 subfamily. As to quaternary structure, interacts (via the POU domain) with POU2AF1 and POU2AF2 in a DNA-dependent manner; this interaction recruits POU2AF2 to chromatin and increases POU2F3 transactivation activity. Skin, thymus, stomach and testis.

The protein localises to the nucleus. Transcription factor that binds to the octamer motif (5'-ATTTGCAT-3'). Regulates cell type-specific differentiation pathways. Involved in the regulation of keratinocytes differentiation. The POU2F3-POU2AF2/POU2AF3 complex drives the expression of tuft-cell-specific genes, a rare chemosensory cells that coordinate immune and neural functions within mucosal epithelial tissues. In Mus musculus (Mouse), this protein is POU domain, class 2, transcription factor 3 (Pou2f3).